The following is a 319-amino-acid chain: L-lactate dehydrogenase 2 (319 aa).

Residues Val-16, Asp-37, Lys-42, Tyr-68, and 82 to 83 (GA) contribute to the NAD(+) site. Gln-85 and Arg-91 together coordinate substrate. Residues Ser-104, 121–123 (AAN), and Ser-146 contribute to the NAD(+) site. 123-126 (NPVD) serves as a coordination point for substrate. 151 to 154 (DSAR) serves as a coordination point for substrate. His-178 acts as the Proton acceptor in catalysis. Tyr-222 is subject to Phosphotyrosine. A substrate-binding site is contributed by Thr-231.

The protein belongs to the LDH/MDH superfamily. LDH family. In terms of assembly, homotetramer.

The protein resides in the cytoplasm. The enzyme catalyses (S)-lactate + NAD(+) = pyruvate + NADH + H(+). It participates in fermentation; pyruvate fermentation to lactate; (S)-lactate from pyruvate: step 1/1. Its function is as follows. Catalyzes the conversion of lactate to pyruvate (Potential). Contributes to S.aureus growth during nitrosative stress in both aerobically and anaerobically cultured cells, despite playing a secondary role in this resistance mechanism. This is L-lactate dehydrogenase 2 from Staphylococcus aureus (strain Mu3 / ATCC 700698).